Reading from the N-terminus, the 348-residue chain is MTAPSQVLKIRRPDDWHLHLRDGDMLKTVVPYTSEIYGRAIVMPNLAPPVTTVEAAVAYRQRILDAVPAGHDFTPLMTCYLTDSLDPNELERGFNEAVFTAAKLYPANATTNSSHGVTSIDAIMPVLERMEKIGMPLLVHGEVTHADIDIFDREARFIESVMEPLRQRLTALKVVFEHITTKDAADYVRDGNERLAATITPQHLMFNRNHMLVGGVRPHLYCLPILKRNIHQQALRELVASGFNRVFLGTDSAPHARHRKESSCGCAGCFNAPTALGSYATVFEEMNALQHFEAFCSVNGPQFYGLPVNDTFIELVREEQQVAESIALTDDTLVPFLAGETVRWSVKQ.

Zn(2+) is bound by residues H17 and H19. Residues 19 to 21 and N45 contribute to the substrate site; that span reads HLR. The Zn(2+) site is built by K103, H140, and H178. K103 carries the N6-carboxylysine modification. H140 serves as a coordination point for substrate. Substrate is bound at residue L223. D251 serves as a coordination point for Zn(2+). Residue D251 is part of the active site. Positions 255 and 267 each coordinate substrate.

The protein belongs to the metallo-dependent hydrolases superfamily. DHOase family. Class II DHOase subfamily. In terms of assembly, homodimer. Requires Zn(2+) as cofactor.

It carries out the reaction (S)-dihydroorotate + H2O = N-carbamoyl-L-aspartate + H(+). It functions in the pathway pyrimidine metabolism; UMP biosynthesis via de novo pathway; (S)-dihydroorotate from bicarbonate: step 3/3. Catalyzes the reversible cyclization of carbamoyl aspartate to dihydroorotate. This Shigella flexneri protein is Dihydroorotase.